We begin with the raw amino-acid sequence, 1486 residues long: Chromosome partition protein MukB (1486 aa).

Position 34–41 (glycine 34–serine 41) interacts with ATP. Coiled coils occupy residues leucine 326–glutamine 418, leucine 444–glutamine 480, and arginine 509–valine 603. The flexible hinge stretch occupies residues proline 666–arginine 783. 3 coiled-coil regions span residues glutamate 835–glutamate 923, glutamate 977–alanine 1115, and valine 1209–serine 1266.

Belongs to the SMC family. MukB subfamily. Homodimerization via its hinge domain. Binds to DNA via its C-terminal region. Interacts, and probably forms a ternary complex, with MukE and MukF via its C-terminal region. The complex formation is stimulated by calcium or magnesium. Interacts with tubulin-related protein FtsZ.

The protein resides in the cytoplasm. Its subcellular location is the nucleoid. Plays a central role in chromosome condensation, segregation and cell cycle progression. Functions as a homodimer, which is essential for chromosome partition. Involved in negative DNA supercoiling in vivo, and by this means organize and compact chromosomes. May achieve or facilitate chromosome segregation by condensation DNA from both sides of a centrally located replisome during cell division. This Shigella boydii serotype 18 (strain CDC 3083-94 / BS512) protein is Chromosome partition protein MukB.